Reading from the N-terminus, the 220-residue chain is Sec-independent protein translocase protein TatB (220 aa).

Residues 1 to 21 form a helical membrane-spanning segment; it reads MFDIGFSELLLVLVIGLVVLG. The disordered stretch occupies residues 192 to 220; sequence KQQIDTIDSHGTDLSSAGPSRIHQPGGDQ.

The protein belongs to the TatB family. In terms of assembly, the Tat system comprises two distinct complexes: a TatABC complex, containing multiple copies of TatA, TatB and TatC subunits, and a separate TatA complex, containing only TatA subunits. Substrates initially bind to the TatABC complex, which probably triggers association of the separate TatA complex to form the active translocon.

Its subcellular location is the cell inner membrane. Part of the twin-arginine translocation (Tat) system that transports large folded proteins containing a characteristic twin-arginine motif in their signal peptide across membranes. Together with TatC, TatB is part of a receptor directly interacting with Tat signal peptides. TatB may form an oligomeric binding site that transiently accommodates folded Tat precursor proteins before their translocation. The sequence is that of Sec-independent protein translocase protein TatB from Yersinia pestis bv. Antiqua (strain Antiqua).